Here is a 345-residue protein sequence, read N- to C-terminus: Tropomodulin-4 (345 aa).

Disordered regions lie at residues 40-64 (PENM…GPLD) and 326-345 (ARAA…QKKR). Basic and acidic residues predominate over residues 336–345 (NELRRQQKKR).

This sequence belongs to the tropomodulin family. As to quaternary structure, binds to the N-terminus of tropomyosin and to actin.

It is found in the cytoplasm. The protein resides in the cytoskeleton. Blocks the elongation and depolymerization of the actin filaments at the pointed end. The Tmod/TM complex contributes to the formation of the short actin protofilament, which in turn defines the geometry of the membrane skeleton. This chain is Tropomodulin-4 (Tmod4), found in Mus musculus (Mouse).